The sequence spans 587 residues: Lipoprotein LpqB (587 aa).

A signal peptide spans 1–19 (MERLMRLTILLFLGAVLAG). Cys-20 is lipidated: N-palmitoyl cysteine. Cys-20 is lipidated: S-diacylglycerol cysteine.

This sequence belongs to the LpqB lipoprotein family.

Its subcellular location is the cell membrane. The chain is Lipoprotein LpqB from Mycobacterium bovis (strain ATCC BAA-935 / AF2122/97).